Here is a 267-residue protein sequence, read N- to C-terminus: Glucosamine-6-phosphate deaminase (267 aa).

The Proton acceptor; for enolization step role is filled by D76. D145 serves as the catalytic For ring-opening step. H147 acts as the Proton acceptor; for ring-opening step in catalysis. The active-site For ring-opening step is E152.

The protein belongs to the glucosamine/galactosamine-6-phosphate isomerase family. In terms of assembly, homohexamer.

The protein localises to the cytoplasm. It catalyses the reaction alpha-D-glucosamine 6-phosphate + H2O = beta-D-fructose 6-phosphate + NH4(+). It participates in nucleotide-sugar biosynthesis; UDP-N-acetyl-alpha-D-glucosamine biosynthesis; alpha-D-glucosamine 6-phosphate from D-fructose 6-phosphate: step 1/1. Its function is as follows. Catalyzes the reversible conversion of alpha-D-glucosamine 6-phosphate (GlcN-6P) into beta-D-fructose 6-phosphate (Fru-6P) and ammonium ion, a regulatory reaction step in de novo uridine diphosphate-N-acetyl-alpha-D-glucosamine (UDP-GlcNAc) biosynthesis via hexosamine pathway. This is Glucosamine-6-phosphate deaminase from Dictyostelium discoideum (Social amoeba).